A 399-amino-acid polypeptide reads, in one-letter code: uncharacterized protein (399 aa).

Belongs to the AdoMet synthetase 2 family.

This is an uncharacterized protein from Streptococcus pyogenes serotype M1.